A 489-amino-acid polypeptide reads, in one-letter code: Glycogen synthase (489 aa).

Arginine 20 is an ADP-alpha-D-glucose binding site.

This sequence belongs to the glycosyltransferase 1 family. Bacterial/plant glycogen synthase subfamily.

The catalysed reaction is [(1-&gt;4)-alpha-D-glucosyl](n) + ADP-alpha-D-glucose = [(1-&gt;4)-alpha-D-glucosyl](n+1) + ADP + H(+). It participates in glycan biosynthesis; glycogen biosynthesis. Its function is as follows. Synthesizes alpha-1,4-glucan chains using ADP-glucose. The chain is Glycogen synthase from Chlorobium phaeobacteroides (strain DSM 266 / SMG 266 / 2430).